The chain runs to 887 residues: MSGVNDIRSAFLDFFKKNGHEVVASGPLVPRNDPTLMFTNAGMVQFKNVFTGMETRPYNRATTAQKCVRAGGKHNDLDNVGYTARHHTFFEMLGNFSFGDYFKDVAIELAWNLVTKEFGLDPKRLLVTVYHTDDEAAGHWRKIAGLPEERIIRIPTSDNFWAMGDTGPCGPCSEIFFDHGEGIPGGPPGSPDEDGDRFIEIWNLVFMQYEQVSPDERINLPRPSIDTGMGLERVAAVLQGVHDNYEIDLFKALIHATEEAVGVRAEGERRPSYKVIADHLRASSFLIADGVLPSNEGRGYVLRRIMRRAMRHAQLLGAEEPLMWRLVPALVREMGQAYPELVRGEALITETLKLEETRFRKTLARGLNLLSDATGGMGEGDRLDGETAFKLYDTYGFPLDLTQDALRQRGVTVDLEGFNAAMERQKAEARASWAGSGEAATEAVWFSVKDRTGATDFLGYETEEAEGIIAALVKDGAMVETAAEGEEVAVVTNQTPFYGESGGQVGDTGTIEGEGFAIEIKNTQKKGEGLFVHFGQVKKGTVRISEPVSLRVDHERRTRIRANHSATHLLHEALREVLGTHVAQKGSLVAPDRLRFDFSHPKPIAEEELQQIEDLANEVVLQNAPVVTRLMAVDDAIAEGAMALFGEKYGDEVRVVSMGKGTQGEKSGKTYSLELCGGTHVNATGDIGLVHIIGEGAVAAGVRRVEALTGAAARRYLDEQERRLKAAASVLKVSPGDLLPRLETLVEERRKLERELSEARKKLALGGGAGAKAGEEREEVGGVGFIGRVVEGISPKDLKPLADEGKKSLGSGVVVFVGTSEEGKASVVVGVTDDLTGRFSAVDLVRKASAAIGGQGGGGRPDMAQAGGPDAANAAAAVEAVRAALAG.

4 residues coordinate Zn(2+): His-564, His-568, Cys-676, and His-680.

It belongs to the class-II aminoacyl-tRNA synthetase family. Zn(2+) serves as cofactor.

Its subcellular location is the cytoplasm. It carries out the reaction tRNA(Ala) + L-alanine + ATP = L-alanyl-tRNA(Ala) + AMP + diphosphate. In terms of biological role, catalyzes the attachment of alanine to tRNA(Ala) in a two-step reaction: alanine is first activated by ATP to form Ala-AMP and then transferred to the acceptor end of tRNA(Ala). Also edits incorrectly charged Ser-tRNA(Ala) and Gly-tRNA(Ala) via its editing domain. In Chelativorans sp. (strain BNC1), this protein is Alanine--tRNA ligase.